Reading from the N-terminus, the 352-residue chain is A-type ATP synthase subunit C (352 aa).

The protein belongs to the V-ATPase V0D/AC39 subunit family. Has multiple subunits with at least A(3), B(3), C, D, E, F, H, I and proteolipid K(x).

It localises to the cell membrane. In terms of biological role, component of the A-type ATP synthase that produces ATP from ADP in the presence of a proton gradient across the membrane. This Halobacterium salinarum (strain ATCC 29341 / DSM 671 / R1) protein is A-type ATP synthase subunit C.